Here is a 626-residue protein sequence, read N- to C-terminus: Dynein, cytoplasmic 1, intermediate chain 2a (626 aa).

Positions 20 to 43 are enriched in basic and acidic residues; sequence QIREEKKRKEEERKKKEAELKKDA. Disordered stretches follow at residues 20 to 108 and 142 to 197; these read QIRE…RTLH and KEVV…HELT. Residues 82–99 show a composition bias toward polar residues; the sequence is TAKSVGSPSEAGSQDSGD. Positions 160 to 169 are enriched in acidic residues; sequence KDEEDEEEET. Basic and acidic residues predominate over residues 177–197; that stretch reads ETEKEKPEEKQVEEALPHELT. WD repeat units lie at residues 265 to 314, 318 to 358, 367 to 408, 417 to 457, 462 to 507, 510 to 550, and 556 to 595; these read SKQR…ATPE, HCQS…RTPV, AHTH…QPQD, SKSV…AGIS, GHHG…PLYS, DNSD…EVPT, and DGSP…AVPR.

It belongs to the dynein intermediate chain family. As to quaternary structure, homodimer. The cytoplasmic dynein 1 complex consists of two catalytic heavy chains (HCs) and a number of non-catalytic subunits presented by intermediate chains (ICs), light intermediate chains (LICs) and light chains (LCs); the composition seems to vary in respect to the IC, LIC and LC composition. The heavy chain homodimer serves as a scaffold for the probable homodimeric assembly of the respective non-catalytic subunits. The ICs and LICs bind directly to the HC dimer and the LCs assemble on the IC dimer.

The protein resides in the cytoplasm. Its subcellular location is the cytoskeleton. Functionally, acts as one of several non-catalytic accessory components of the cytoplasmic dynein 1 complex that are thought to be involved in linking dynein to cargos and to adapter proteins that regulate dynein function. Cytoplasmic dynein 1 acts as a motor for the intracellular retrograde motility of vesicles and organelles along microtubules. Plays a role in the development of anterior brain and cartilaginous structures. In Danio rerio (Zebrafish), this protein is Dynein, cytoplasmic 1, intermediate chain 2a (dync1i2a).